Consider the following 369-residue polypeptide: Queuine tRNA-ribosyltransferase (369 aa).

D90 serves as the catalytic Proton acceptor. Residues 90–94 (DSGGF), D144, Q186, and G213 contribute to the substrate site. Residues 244-250 (GVGKPAD) are RNA binding. D263 serves as the catalytic Nucleophile. Zn(2+) is bound by residues C301, C303, C306, and H332.

This sequence belongs to the queuine tRNA-ribosyltransferase family. In terms of assembly, homodimer. Within each dimer, one monomer is responsible for RNA recognition and catalysis, while the other monomer binds to the replacement base PreQ1. Zn(2+) serves as cofactor.

The enzyme catalyses 7-aminomethyl-7-carbaguanine + guanosine(34) in tRNA = 7-aminomethyl-7-carbaguanosine(34) in tRNA + guanine. It participates in tRNA modification; tRNA-queuosine biosynthesis. Catalyzes the base-exchange of a guanine (G) residue with the queuine precursor 7-aminomethyl-7-deazaguanine (PreQ1) at position 34 (anticodon wobble position) in tRNAs with GU(N) anticodons (tRNA-Asp, -Asn, -His and -Tyr). Catalysis occurs through a double-displacement mechanism. The nucleophile active site attacks the C1' of nucleotide 34 to detach the guanine base from the RNA, forming a covalent enzyme-RNA intermediate. The proton acceptor active site deprotonates the incoming PreQ1, allowing a nucleophilic attack on the C1' of the ribose to form the product. After dissociation, two additional enzymatic reactions on the tRNA convert PreQ1 to queuine (Q), resulting in the hypermodified nucleoside queuosine (7-(((4,5-cis-dihydroxy-2-cyclopenten-1-yl)amino)methyl)-7-deazaguanosine). In Dichelobacter nodosus (strain VCS1703A), this protein is Queuine tRNA-ribosyltransferase.